The sequence spans 39 residues: Photosystem II reaction center protein J (39 aa).

The helical transmembrane segment at 9-29 (LWMVATVGGLAAGGLLILFVF) threads the bilayer.

It belongs to the PsbJ family. In terms of assembly, PSII is composed of 1 copy each of membrane proteins PsbA, PsbB, PsbC, PsbD, PsbE, PsbF, PsbH, PsbI, PsbJ, PsbK, PsbL, PsbM, PsbT, PsbX, PsbY, PsbZ, Psb30/Ycf12, at least 3 peripheral proteins of the oxygen-evolving complex and a large number of cofactors. It forms dimeric complexes.

It localises to the plastid. The protein resides in the chloroplast thylakoid membrane. Functionally, one of the components of the core complex of photosystem II (PSII). PSII is a light-driven water:plastoquinone oxidoreductase that uses light energy to abstract electrons from H(2)O, generating O(2) and a proton gradient subsequently used for ATP formation. It consists of a core antenna complex that captures photons, and an electron transfer chain that converts photonic excitation into a charge separation. The sequence is that of Photosystem II reaction center protein J from Emiliania huxleyi (Coccolithophore).